The primary structure comprises 385 residues: Probable peptidoglycan glycosyltransferase FtsW (385 aa).

Transmembrane regions (helical) follow at residues 18–38, 57–77, 81–101, 111–131, 157–177, 195–215, 280–300, 311–331, and 347–367; these read LLWTAILLALAGLVMVSSASL, IYLALGLGVGAFVYYAVPLAL, LRFVMLPVALVALVMVFIPGL, WIALPGLTIQASEIVKLCFVL, LLGVLMLLLLLEPDFGAVVVL, FLLIGLIAVALGGLVAFAEPY, LGLLGNVALIGGFILLGWRVF, LLYHAYLVYGCAFVFCSQAFI, and LPFISYGGSSLLISAVMVGLI.

Belongs to the SEDS family. FtsW subfamily.

The protein localises to the cell inner membrane. The enzyme catalyses [GlcNAc-(1-&gt;4)-Mur2Ac(oyl-L-Ala-gamma-D-Glu-L-Lys-D-Ala-D-Ala)](n)-di-trans,octa-cis-undecaprenyl diphosphate + beta-D-GlcNAc-(1-&gt;4)-Mur2Ac(oyl-L-Ala-gamma-D-Glu-L-Lys-D-Ala-D-Ala)-di-trans,octa-cis-undecaprenyl diphosphate = [GlcNAc-(1-&gt;4)-Mur2Ac(oyl-L-Ala-gamma-D-Glu-L-Lys-D-Ala-D-Ala)](n+1)-di-trans,octa-cis-undecaprenyl diphosphate + di-trans,octa-cis-undecaprenyl diphosphate + H(+). Its pathway is cell wall biogenesis; peptidoglycan biosynthesis. Its function is as follows. Peptidoglycan polymerase that is essential for cell division. This is Probable peptidoglycan glycosyltransferase FtsW from Alcanivorax borkumensis (strain ATCC 700651 / DSM 11573 / NCIMB 13689 / SK2).